We begin with the raw amino-acid sequence, 318 residues long: UDP-N-acetylenolpyruvoylglucosamine reductase (318 aa).

One can recognise an FAD-binding PCMH-type domain in the interval 38 to 204; sequence IGGVCPVIVE…LGIEILLKEG (167 aa). Arg-182 is a catalytic residue. The span at 212–229 shows a compositional bias: basic and acidic residues; the sequence is SLKDKRDRRNSSQPENKK. The interval 212-232 is disordered; sequence SLKDKRDRRNSSQPENKKSAG. Catalysis depends on Ser-233, which acts as the Proton donor. Glu-310 is a catalytic residue.

Belongs to the MurB family. Requires FAD as cofactor.

The protein localises to the cytoplasm. The catalysed reaction is UDP-N-acetyl-alpha-D-muramate + NADP(+) = UDP-N-acetyl-3-O-(1-carboxyvinyl)-alpha-D-glucosamine + NADPH + H(+). It participates in cell wall biogenesis; peptidoglycan biosynthesis. Functionally, cell wall formation. This chain is UDP-N-acetylenolpyruvoylglucosamine reductase, found in Leptospira interrogans serogroup Icterohaemorrhagiae serovar copenhageni (strain Fiocruz L1-130).